A 137-amino-acid chain; its full sequence is MAPKAADKKPASKAPATASKAPEKKDAGKKTAPSGDKKKRTKARKETYSSYIYKVLKQVHPDTGISNRAMSILNSFVNDIFERVATEASKLAAYNKKSTISSREIQTSVRLILPGELAKHAVSEGTKAVTKYSSSTK.

A compositionally biased stretch (basic and acidic residues) spans 1–10; sequence MAPKAADKKP. Residues 1-45 form a disordered region; sequence MAPKAADKKPASKAPATASKAPEKKDAGKKTAPSGDKKKRTKARK. An N6-acetyllysine; alternate mark is found at lysine 8 and lysine 9. Residues lysine 8 and lysine 9 each participate in a glycyl lysine isopeptide (Lys-Gly) (interchain with G-Cter in SUMO); alternate cross-link. Serine 12 carries the phosphoserine modification. Lysine 13 bears the N6-acetyllysine mark. Position 24 is an N6-acetyllysine; alternate (lysine 24). A Glycyl lysine isopeptide (Lys-Gly) (interchain with G-Cter in SUMO); alternate cross-link involves residue lysine 24. Residue lysine 25 forms a Glycyl lysine isopeptide (Lys-Gly) (interchain with G-Cter in SUMO) linkage. Lysine 131 is covalently cross-linked (Glycyl lysine isopeptide (Lys-Gly) (interchain with G-Cter in ubiquitin)).

It belongs to the histone H2B family. As to quaternary structure, the nucleosome is a histone octamer containing two molecules each of H2A, H2B, H3 and H4 assembled in one H3-H4 heterotetramer and two H2A-H2B heterodimers. The octamer wraps approximately 147 bp of DNA. Monoubiquitinated by the UBC2-BRE1 complex to form H2BK123ub1. H2BK123ub1 gives a specific tag for epigenetic transcriptional activation and is also prerequisite for H3K4me and H3K79me formation. H2BK123ub1 also modulates the formation of double-strand breaks during meiosis and is a prerequisite for DNA-damage checkpoint activation. Post-translationally, phosphorylated to form H2BS10ph during progression through meiotic prophase. May be correlated with chromosome condensation. In terms of processing, acetylated by GCN5 to form H2BK11ac and H2BK16ac. H2BK16ac can also be formed by ESA1. Acetylation of N-terminal lysines and particularly formation of H2BK11acK16ac has a positive effect on transcription. Sumoylation to form H2BK6su or H2BK7su, and probably also H2BK16su or H2BK17su, occurs preferentially near the telomeres and represses gene transcription.

The protein resides in the nucleus. The protein localises to the chromosome. In terms of biological role, core component of nucleosome. Nucleosomes wrap and compact DNA into chromatin, limiting DNA accessibility to the cellular machineries which require DNA as a template. Histones thereby play a central role in transcription regulation, DNA repair, DNA replication and chromosomal stability. DNA accessibility is regulated via a complex set of post-translational modifications of histones, also called histone code, and nucleosome remodeling. The chain is Histone H2B (HTB1) from Chaetomium globosum (strain ATCC 6205 / CBS 148.51 / DSM 1962 / NBRC 6347 / NRRL 1970) (Soil fungus).